Reading from the N-terminus, the 217-residue chain is Thymidylate kinase (217 aa).

Position 14 to 21 (G14 to T21) interacts with ATP.

The protein belongs to the thymidylate kinase family.

The enzyme catalyses dTMP + ATP = dTDP + ADP. Phosphorylation of dTMP to form dTDP in both de novo and salvage pathways of dTTP synthesis. The chain is Thymidylate kinase from Orientia tsutsugamushi (strain Ikeda) (Rickettsia tsutsugamushi).